A 255-amino-acid polypeptide reads, in one-letter code: Glutamate racemase (255 aa).

Residues 7-8 (DS) and 39-40 (YG) contribute to the substrate site. C70 acts as the Proton donor/acceptor in catalysis. 71 to 72 (NT) provides a ligand contact to substrate. The active-site Proton donor/acceptor is the C181. 182–183 (TH) contacts substrate.

Belongs to the aspartate/glutamate racemases family.

It catalyses the reaction L-glutamate = D-glutamate. It functions in the pathway cell wall biogenesis; peptidoglycan biosynthesis. In terms of biological role, provides the (R)-glutamate required for cell wall biosynthesis. This is Glutamate racemase from Helicobacter pylori (strain Shi470).